Here is a 130-residue protein sequence, read N- to C-terminus: MNPPSTKVPWAAVTLLLLLLLPPALLSPGAAAQPLPDCCRQKTCSCRLYELLHGAGNHAAGILTLGKRRPGPPGLQGRLQRLLQASGNHAAGILTMGRRAGAEPAPRPCPGRRCPVVAVPSAAPGGRSGV.

Residues 1–32 (MNPPSTKVPWAAVTLLLLLLLPPALLSPGAAA) form the signal peptide. Residue glutamine 33 is modified to Pyrrolidone carboxylic acid. Cystine bridges form between cysteine 38–cysteine 44 and cysteine 39–cysteine 46. Leucine 65 bears the Leucine amide mark. Residue methionine 96 is modified to Methionine amide. The propeptide at 97-130 (GRRAGAEPAPRPCPGRRCPVVAVPSAAPGGRSGV) is removed in mature form.

Belongs to the orexin family. In terms of processing, specific enzymatic cleavages at paired basic residues yield the different active peptides.

Its subcellular location is the rough endoplasmic reticulum. The protein resides in the cytoplasmic vesicle. The protein localises to the synapse. Its function is as follows. Neuropeptides that play a significant role in the regulation of food intake and sleep-wakefulness, possibly by coordinating the complex behavioral and physiologic responses of these complementary homeostatic functions. A broader role in the homeostatic regulation of energy metabolism, autonomic function, hormonal balance and the regulation of body fluids, is also suggested. Binds to orexin receptors HCRTR1/OX1R and HCRTR2/OX2R with a high affinity. Stimulates food intake. Modulates pituitary luteinizing hormone secretion in an ovarian steroid-dependent manner. Functionally, binds to orexin receptor HCRTR2/OX2R only. Stimulates food intake. Modulates pituitary luteinizing hormone secretion in an ovarian steroid-dependent manner. The polypeptide is Hypocretin neuropeptide precursor (HCRT) (Canis lupus familiaris (Dog)).